The primary structure comprises 414 residues: Cytochrome P450 GfsF (414 aa).

The tract at residues 1-32 (MTDTTLVEAGDPAEDAPEWPMKRDTGCPFDPP) is disordered. Heme b is bound by residues His75, His107, Arg111, Arg303, His361, and Cys363.

The protein belongs to the cytochrome P450 family. In terms of assembly, monomer. The cofactor is heme b.

It functions in the pathway antibiotic biosynthesis. In terms of biological role, involved in the synthesis of the 16-membered macrolide antibiotics FD-891 and FD-892. Consecutively catalyzes epoxidation of C8-C9 and then hydroxylation at C10 to convert 25-O-methyl-FD-892 to FD-891. Consecutively catalyzes epoxidation of C8-C9 and then hydroxylation at C10 to convert 8,9-epoxy-FD-892 to 25-O-demethyl-FD-891 as well as converting 25-oxo-FD-892 to 8,9-epoxy-25-oxo-FD-892 and 8,9-epoxy-10-hydroxy-25-oxo-FD-892. In vitro is furnished with P.putida putidaredoxin and putidaredoxin reductase to provide the required two-electron reduction. The chain is Cytochrome P450 GfsF from Streptomyces halstedii.